A 111-amino-acid polypeptide reads, in one-letter code: Cryptic phage CTXphi transcriptional repressor RstR (111 aa).

Residues 6–60 enclose the HTH cro/C1-type domain; sequence IRDLRVERDLNQEEVANGIGVGKNTYLAYEKGTQSPKLETVEKLAKFYGVPIAEL. The H-T-H motif DNA-binding region spans 17–36; it reads QEEVANGIGVGKNTYLAYEK.

Transcriptional repressor of the integrated CTXPhi phage gene rstA2. In Vibrio cholerae, this protein is Cryptic phage CTXphi transcriptional repressor RstR (rstR).